Reading from the N-terminus, the 642-residue chain is uncharacterized protein (642 aa).

2 residues coordinate Mg(2+): glutamate 15 and aspartate 118. The 121-residue stretch at 29–149 (VCVDTCVVID…YNLAKAQGIE (121 aa)) folds into the PINc domain. In terms of domain architecture, KH spans 510 to 578 (DNSIDLIVPE…ELESTRIYET (69 aa)).

The protein in the N-terminal section; belongs to the PINc/VapC protein family. Mg(2+) serves as cofactor.

This is an uncharacterized protein from Methanocaldococcus jannaschii (strain ATCC 43067 / DSM 2661 / JAL-1 / JCM 10045 / NBRC 100440) (Methanococcus jannaschii).